The chain runs to 540 residues: CTP synthase (540 aa).

The segment at M1 to L267 is amidoligase domain. S15 is a CTP binding site. S15 is a UTP binding site. An ATP-binding site is contributed by S16–I21. Residue Y56 participates in L-glutamine binding. ATP is bound at residue D73. Mg(2+) contacts are provided by D73 and E141. CTP-binding positions include D148–E150, K188–Q193, and K224. UTP-binding positions include K188 to Q193 and K224. ATP is bound at residue R240 to A242. In terms of domain architecture, Glutamine amidotransferase type-1 spans T292–K540. G360 serves as a coordination point for L-glutamine. The Nucleophile; for glutamine hydrolysis role is filled by C387. L-glutamine contacts are provided by residues M388 to Q391, E411, and R468. Active-site residues include H513 and E515.

It belongs to the CTP synthase family. As to quaternary structure, homotetramer.

It catalyses the reaction UTP + L-glutamine + ATP + H2O = CTP + L-glutamate + ADP + phosphate + 2 H(+). It carries out the reaction L-glutamine + H2O = L-glutamate + NH4(+). The enzyme catalyses UTP + NH4(+) + ATP = CTP + ADP + phosphate + 2 H(+). The protein operates within pyrimidine metabolism; CTP biosynthesis via de novo pathway; CTP from UDP: step 2/2. With respect to regulation, allosterically activated by GTP, when glutamine is the substrate; GTP has no effect on the reaction when ammonia is the substrate. The allosteric effector GTP functions by stabilizing the protein conformation that binds the tetrahedral intermediate(s) formed during glutamine hydrolysis. Inhibited by the product CTP, via allosteric rather than competitive inhibition. Functionally, catalyzes the ATP-dependent amination of UTP to CTP with either L-glutamine or ammonia as the source of nitrogen. Regulates intracellular CTP levels through interactions with the four ribonucleotide triphosphates. In Methanocaldococcus jannaschii (strain ATCC 43067 / DSM 2661 / JAL-1 / JCM 10045 / NBRC 100440) (Methanococcus jannaschii), this protein is CTP synthase.